The following is a 471-amino-acid chain: Heat shock 70 kDa protein 13 (471 aa).

The signal sequence occupies residues 1-22 (MAGEMTILGSAVLTLLLAGYLA). Asparagine 184 carries N-linked (GlcNAc...) asparagine glycosylation. Residues 316–339 (NDSQKPQNADSKLPEDQLTPGDGH) are disordered.

It belongs to the heat shock protein 70 family. In terms of assembly, binds UBQLN2.

Its subcellular location is the microsome. It is found in the endoplasmic reticulum. In terms of biological role, has peptide-independent ATPase activity. The protein is Heat shock 70 kDa protein 13 (Hspa13) of Rattus norvegicus (Rat).